The primary structure comprises 163 residues: Globin CTT-Z (163 aa).

Residues M1–A16 form the signal peptide. A Globin domain is found at P18–T162. Heme b contacts are provided by H76 and H111.

It belongs to the globin family.

The polypeptide is Globin CTT-Z (CTT-Z) (Chironomus thummi thummi (Midge)).